A 496-amino-acid chain; its full sequence is Genome polyprotein (496 aa).

At 1–447 (SRCTHLENRD…HTVLGGAFNS (447 aa)) the chain is on the extracellular side. 6 disulfide bridges follow: C3/C30, C60/C116, C60/C121, C74/C105, C92/C116, and C92/C121. Residues 98–111 (DRGWGNHCGLFGKG) form a fusion peptide region. Residue N154 is glycosylated (N-linked (GlcNAc...) asparagine; by host). 2 disulfide bridges follow: C186/C290 and C307/C338. A helical transmembrane segment spans residues 448–468 (IFGGVGFLPKLLMGVALAWLG). Residues 469–479 (LNTRNPTMSMS) are Cytoplasmic-facing. Residues 480 to 496 (FLLTGGLVLAMTLGVGA) traverse the membrane as a helical segment.

As to quaternary structure, homodimer; in the endoplasmic reticulum and Golgi. N-glycosylated.

The protein localises to the virion membrane. Its subcellular location is the host endoplasmic reticulum membrane. Functionally, binds to host cell surface receptor and mediates fusion between viral and cellular membranes. Envelope protein is synthesized in the endoplasmic reticulum in the form of heterodimer with protein prM. They play a role in virion budding in the ER, and the newly formed immature particle is covered with 60 spikes composed of heterodimer between precursor prM and envelope protein E. The virion is transported to the Golgi apparatus where the low pH causes dissociation of PrM-E heterodimers and formation of E homodimers. prM-E cleavage is ineficient, and many virions are only partially matured. These uncleaved prM would play a role in immune evasion. The sequence is that of Genome polyprotein from Bos taurus (Bovine).